Here is a 146-residue protein sequence, read N- to C-terminus: Large ribosomal subunit protein uL15 (146 aa).

Over residues 1–18 the composition is skewed to basic and acidic residues; it reads MKLHELKPSEGSRKERNR. Positions 1–57 are disordered; it reads MKLHELKPSEGSRKERNRVGRGIGSGNGKTSGKGHKGQNARSGGGVRPGFEGGQMPL. Gly residues-rich tracts occupy residues 21 to 31 and 42 to 52; these read RGIGSGNGKTS and SGGGVRPGFEG.

It belongs to the universal ribosomal protein uL15 family. In terms of assembly, part of the 50S ribosomal subunit.

Its function is as follows. Binds to the 23S rRNA. In Bacillus pumilus (strain SAFR-032), this protein is Large ribosomal subunit protein uL15.